Consider the following 357-residue polypeptide: tRNA N6-adenosine threonylcarbamoyltransferase (357 aa).

The Fe cation site is built by His115 and His119. Substrate contacts are provided by residues 137–141, Asp170, Gly183, and Asn281; that span reads LASGG. Asp309 provides a ligand contact to Fe cation.

The protein belongs to the KAE1 / TsaD family. Fe(2+) serves as cofactor.

The protein localises to the cytoplasm. It catalyses the reaction L-threonylcarbamoyladenylate + adenosine(37) in tRNA = N(6)-L-threonylcarbamoyladenosine(37) in tRNA + AMP + H(+). Its function is as follows. Required for the formation of a threonylcarbamoyl group on adenosine at position 37 (t(6)A37) in tRNAs that read codons beginning with adenine. Is involved in the transfer of the threonylcarbamoyl moiety of threonylcarbamoyl-AMP (TC-AMP) to the N6 group of A37, together with TsaE and TsaB. TsaD likely plays a direct catalytic role in this reaction. The chain is tRNA N6-adenosine threonylcarbamoyltransferase from Nitrobacter winogradskyi (strain ATCC 25391 / DSM 10237 / CIP 104748 / NCIMB 11846 / Nb-255).